The sequence spans 405 residues: Phosphopentomutase (405 aa).

Mn(2+)-binding residues include aspartate 10, aspartate 303, histidine 308, aspartate 344, histidine 345, and histidine 356.

Belongs to the phosphopentomutase family. The cofactor is Mn(2+).

Its subcellular location is the cytoplasm. It catalyses the reaction 2-deoxy-alpha-D-ribose 1-phosphate = 2-deoxy-D-ribose 5-phosphate. It carries out the reaction alpha-D-ribose 1-phosphate = D-ribose 5-phosphate. It functions in the pathway carbohydrate degradation; 2-deoxy-D-ribose 1-phosphate degradation; D-glyceraldehyde 3-phosphate and acetaldehyde from 2-deoxy-alpha-D-ribose 1-phosphate: step 1/2. In terms of biological role, isomerase that catalyzes the conversion of deoxy-ribose 1-phosphate (dRib-1-P) and ribose 1-phosphate (Rib-1-P) to deoxy-ribose 5-phosphate (dRib-5-P) and ribose 5-phosphate (Rib-5-P), respectively. This chain is Phosphopentomutase, found in Shewanella denitrificans (strain OS217 / ATCC BAA-1090 / DSM 15013).